Reading from the N-terminus, the 250-residue chain is 2,3-bisphosphoglycerate-dependent phosphoglycerate mutase (250 aa).

(2R)-2,3-bisphosphoglycerate contacts are provided by Arg-10, His-11, Asn-17, Gly-24, Arg-62, Glu-89, Tyr-92, Lys-100, Arg-116, Arg-117, His-184, Gly-185, and Asn-186. Residue His-11 is the Tele-phosphohistidine intermediate of the active site. Residue Gly-24 coordinates (2R)-3-phosphoglycerate. Glu-89, Tyr-92, Lys-100, Arg-116, and Arg-117 together coordinate (2R)-3-phosphoglycerate. The active-site Proton donor/acceptor is the Glu-89. Position 186 (Asn-186) interacts with (2R)-3-phosphoglycerate.

This sequence belongs to the phosphoglycerate mutase family. BPG-dependent PGAM subfamily. Ubiquitously expressed with the highest expression in the sub-tegumental muscle layer (at protein level). Expressed in the tegument (at protein level).

Its subcellular location is the tegument. It catalyses the reaction (2R)-2-phosphoglycerate = (2R)-3-phosphoglycerate. It participates in carbohydrate degradation; glycolysis; pyruvate from D-glyceraldehyde 3-phosphate: step 3/5. Its activity is regulated as follows. Strongly activated by 2,3-bisphosphoglycerate (2,3-BPG). Inhibited by vanadate in a dose-dependent manner. Its function is as follows. Catalyzes interconversion of 3- and 2-phosphoglycerate with 2,3-bisphosphoglycerate (2,3-BPG) as the primer of the reaction. Schistosomula have significant surface phosphoglycerate mutase activity also without 2,3-BPG. Binds human plasminogen and enhances its conversion to active thrombolytic plasmin in the presence of human tissue plasminogen activator (tPA) in vitro. Host-interactive surface protein, which may degrade vascular blood clots surrounding the worm in vivo and thus may help survival of the parasite in its host microenvironment. This is 2,3-bisphosphoglycerate-dependent phosphoglycerate mutase from Schistosoma mansoni (Blood fluke).